A 560-amino-acid chain; its full sequence is Serine palmitoyltransferase 2 (560 aa).

A helical transmembrane segment spans residues 65-85; the sequence is PMLVAVLTYVGYGVLTLFGYL. Position 377 is an N6-(pyridoxal phosphate)lysine (lysine 377).

Belongs to the class-II pyridoxal-phosphate-dependent aminotransferase family. In terms of assembly, component of the serine palmitoyltransferase (SPT) complex, which is composed of SPTLC1, SPTLC2 or SPTLC3 and SPTSSA or SPTSSB. The heterodimer consisting of SPTLC1 and SPTLC2/SPTLC3 forms the catalytic core of the enzyme, while SPTSSA or SPTSSB subunits determine substrate specificity. SPT also interacts with ORMDL proteins, especially ORMDL3, which negatively regulate SPT activity in the presence of ceramides. Forms dimers of heterodimers with SPTLC1. Requires pyridoxal 5'-phosphate as cofactor. As to expression, expressed in astrocytes.

The protein localises to the endoplasmic reticulum membrane. It catalyses the reaction L-serine + hexadecanoyl-CoA + H(+) = 3-oxosphinganine + CO2 + CoA. It carries out the reaction octadecanoyl-CoA + L-serine + H(+) = 3-oxoeicosasphinganine + CO2 + CoA. It participates in lipid metabolism; sphingolipid metabolism. SPT complex catalytic activity is negatively regulated by ORMDL proteins, including ORMDL3, in the presence of ceramides. This mechanism allows to maintain ceramide levels at sufficient concentrations for the production of complex sphingolipids, but which prevents the accumulation of ceramides to levels that trigger apoptosis. Its function is as follows. Component of the serine palmitoyltransferase multisubunit enzyme (SPT) that catalyzes the initial and rate-limiting step in sphingolipid biosynthesis by condensing L-serine and activated acyl-CoA (most commonly palmitoyl-CoA) to form long-chain bases. The SPT complex is composed of SPTLC1, SPTLC2 or SPTLC3 and SPTSSA or SPTSSB. Within this complex, the heterodimer consisting of SPTLC1 and SPTLC2/SPTLC3 forms the catalytic core. The composition of the serine palmitoyltransferase (SPT) complex determines the substrate preference. The SPTLC1-SPTLC2-SPTSSA complex shows a strong preference for C16-CoA substrate, while the SPTLC1-SPTLC3-SPTSSA isozyme uses both C14-CoA and C16-CoA as substrates, with a slight preference for C14-CoA. The SPTLC1-SPTLC2-SPTSSB complex shows a strong preference for C18-CoA substrate, while the SPTLC1-SPTLC3-SPTSSB isozyme displays an ability to use a broader range of acyl-CoAs, without apparent preference. Crucial for adipogenesis. This chain is Serine palmitoyltransferase 2, found in Rattus norvegicus (Rat).